The sequence spans 589 residues: uncharacterized protein (589 aa).

Disordered stretches follow at residues leucine 328–proline 365, serine 379–asparagine 459, arginine 525–lysine 555, and valine 569–methionine 589. Polar residues predominate over residues valine 398 to glutamate 425. Positions threonine 426–asparagine 445 are enriched in basic and acidic residues. A compositionally biased stretch (acidic residues) spans glutamine 536–glycine 545.

This is an uncharacterized protein from Mycosarcoma maydis (Corn smut fungus).